We begin with the raw amino-acid sequence, 766 residues long: Pentatricopeptide repeat-containing protein At3g61520, mitochondrial (766 aa).

The N-terminal 30 residues, 1 to 30 (MSIMLSISRRRNSYILLNHSRFLRRFSYDV), are a transit peptide targeting the mitochondrion. PPR repeat units lie at residues 151–181 (TVVA…LDSN), 184–218 (NSQV…ESVF), 221–257 (NRIT…GVSP), 258–292 (NSVW…KTPL), 293–327 (EAPP…KIRP), 328–358 (DVVT…MRGK), 369–404 (DSIH…RCAP), 405–439 (NAVT…EIKP), 440–474 (NVVT…GVKG), 475–509 (NVVT…GCSP), 510–544 (DAKI…GFSL), 545–579 (DLLA…GKKP), 580–614 (DSIT…GLDP), 615–650 (TVTT…KVNP), 651–685 (NTVI…MVRP), and 686–720 (NVET…SCEP).

The protein belongs to the PPR family. P subfamily.

The protein resides in the mitochondrion. In Arabidopsis thaliana (Mouse-ear cress), this protein is Pentatricopeptide repeat-containing protein At3g61520, mitochondrial.